An 89-amino-acid polypeptide reads, in one-letter code: Nucleoside triphosphatase I (89 aa).

In terms of domain architecture, Helicase ATP-binding spans 42–89; the sequence is FLGLDKMHSLLLFHDTGVGKTITTTFIIKQLKNIYTNWSILLLVKKHL. 55–62 contacts ATP; the sequence is HDTGVGKT.

It belongs to the helicase family. NPH I subfamily.

It carries out the reaction a ribonucleoside 5'-triphosphate + H2O = a ribonucleoside 5'-diphosphate + phosphate + H(+). In terms of biological role, serves two roles in transcription; it acts in concert with viral termination factor/capping enzyme to catalyze release of UUUUUNU-containing nascent RNA from the elongation complex, and it acts by itself as a polymerase elongation factor to facilitate readthrough of intrinsic pause sites. This is Nucleoside triphosphatase I (NPH1) from Swinepox virus (strain Kasza) (SWPV).